The primary structure comprises 125 residues: Fluoride-specific ion channel FluC (125 aa).

The next 4 helical transmembrane spans lie at 1–21 (MIQA…RYYV), 32–52 (AFPW…GVFA), 68–88 (LLIT…LDAI), and 101–121 (IYIA…LAVM). Na(+)-binding residues include Gly-75 and Thr-78.

Belongs to the fluoride channel Fluc/FEX (TC 1.A.43) family.

Its subcellular location is the cell inner membrane. The catalysed reaction is fluoride(in) = fluoride(out). Na(+) is not transported, but it plays an essential structural role and its presence is essential for fluoride channel function. Fluoride-specific ion channel. Important for reducing fluoride concentration in the cell, thus reducing its toxicity. The sequence is that of Fluoride-specific ion channel FluC from Rhizobium etli (strain CIAT 652).